Reading from the N-terminus, the 132-residue chain is Phosphoribosyl-AMP cyclohydrolase (132 aa).

Asp-79 contributes to the Mg(2+) binding site. Cys-80 is a binding site for Zn(2+). Mg(2+) contacts are provided by Asp-81 and Asp-83. Residues Cys-100 and Cys-107 each contribute to the Zn(2+) site.

The protein belongs to the PRA-CH family. In terms of assembly, homodimer. Mg(2+) serves as cofactor. Requires Zn(2+) as cofactor.

It is found in the cytoplasm. The catalysed reaction is 1-(5-phospho-beta-D-ribosyl)-5'-AMP + H2O = 1-(5-phospho-beta-D-ribosyl)-5-[(5-phospho-beta-D-ribosylamino)methylideneamino]imidazole-4-carboxamide. It participates in amino-acid biosynthesis; L-histidine biosynthesis; L-histidine from 5-phospho-alpha-D-ribose 1-diphosphate: step 3/9. In terms of biological role, catalyzes the hydrolysis of the adenine ring of phosphoribosyl-AMP. The sequence is that of Phosphoribosyl-AMP cyclohydrolase from Delftia acidovorans (strain DSM 14801 / SPH-1).